A 204-amino-acid chain; its full sequence is Small ribosomal subunit protein uS4 (204 aa).

The disordered stretch occupies residues 22-43; that stretch reads SGKELARRPYAPGDHGNTGRRP. The S4 RNA-binding domain maps to 94–154; the sequence is TRLDSVVFRL…ERSKKIVPIL (61 aa).

Belongs to the universal ribosomal protein uS4 family. As to quaternary structure, part of the 30S ribosomal subunit. Contacts protein S5. The interaction surface between S4 and S5 is involved in control of translational fidelity.

In terms of biological role, one of the primary rRNA binding proteins, it binds directly to 16S rRNA where it nucleates assembly of the body of the 30S subunit. Functionally, with S5 and S12 plays an important role in translational accuracy. This chain is Small ribosomal subunit protein uS4, found in Oenococcus oeni (strain ATCC BAA-331 / PSU-1).